The following is a 202-amino-acid chain: CASP-like protein 2B1 (202 aa).

At 1–29 (MSYLGVGVSPGNVPVYHGTNSKVIDRRVR) the chain is on the cytoplasmic side. A helical membrane pass occupies residues 30–50 (LAELVLRCVICCLGVLAAVLV). Residues 51–72 (GTDTQVKEIFSIQKKARFTDMK) lie on the Extracellular side of the membrane. The helical transmembrane segment at 73–93 (ALVFLVAANGIAAAYSFVQGV) threads the bilayer. The Cytoplasmic portion of the chain corresponds to 94 to 109 (RCVVGMVKGSVLFSKP). The helical transmembrane segment at 110–132 (LAWVIFSGDQMMAYLTMSAVAAA) threads the bilayer. The Extracellular segment spans residues 133-164 (AQSSVFAKLGQPDLQWMKICTMYGKFCNQVGE). The helical transmembrane segment at 165–185 (GIASALLVSVSMVVLSCISAF) threads the bilayer. The Cytoplasmic segment spans residues 186–202 (SLFRLYGGNKGKDGARW).

It belongs to the Casparian strip membrane proteins (CASP) family. In terms of assembly, homodimer and heterodimers.

Its subcellular location is the cell membrane. The polypeptide is CASP-like protein 2B1 (Populus trichocarpa (Western balsam poplar)).